The primary structure comprises 833 residues: Leucine--tRNA ligase (833 aa).

The short motif at 41-52 (PYPSGAGLHVGH) is the 'HIGH' region element. Residues 610 to 614 (KMSKS) carry the 'KMSKS' region motif. Lys-613 contacts ATP.

This sequence belongs to the class-I aminoacyl-tRNA synthetase family.

The protein localises to the cytoplasm. The catalysed reaction is tRNA(Leu) + L-leucine + ATP = L-leucyl-tRNA(Leu) + AMP + diphosphate. This is Leucine--tRNA ligase from Streptococcus pneumoniae serotype 19F (strain G54).